The chain runs to 612 residues: Proton channel OTOP1 (612 aa).

Positions Met1 to Arg46 are enriched in low complexity. Residues Met1–Arg50 are disordered. The Cytoplasmic portion of the chain corresponds to Met1–Ala58. A helical membrane pass occupies residues Glu59–Trp80. Topologically, residues Ala81 to Ser88 are extracellular. Residues Lys89–Gly112 form a helical membrane-spanning segment. The Cytoplasmic segment spans residues Arg113 to Ala130. The chain crosses the membrane as a helical span at residues Gly131–Gly153. Residues Tyr154–Ser163 are Extracellular-facing. The helical transmembrane segment at Ala164–Ala188 threads the bilayer. Topologically, residues Lys189–Lys196 are cytoplasmic. A helical transmembrane segment spans residues Thr197–Lys223. The Extracellular segment spans residues His224 to Ser264. Residues His265–Lys290 traverse the membrane as a helical segment. The Cytoplasmic portion of the chain corresponds to Asn291–Val311. A helical membrane pass occupies residues Met312–Ile334. Over His335 to Glu344 the chain is Extracellular. A helical transmembrane segment spans residues Ser345–Arg370. Residues Ile371–Lys388 are Cytoplasmic-facing. The helical transmembrane segment at Leu389–Leu413 threads the bilayer. The Extracellular segment spans residues Cys414–Trp423. A helical membrane pass occupies residues Tyr424 to Phe444. Residues Glu445–Arg544 are Cytoplasmic-facing. The disordered stretch occupies residues Ala499 to Pro525. Basic and acidic residues predominate over residues Arg506–Glu518. The chain crosses the membrane as a helical span at residues Asn545 to Phe563. The Extracellular portion of the chain corresponds to Gly564–Glu581. The chain crosses the membrane as a helical span at residues Pro582 to Leu605. The Cytoplasmic portion of the chain corresponds to Phe606–Ile612.

The protein belongs to the otopetrin family. Homodimer. Interacts with STAT1, independently of STAT1 phosphorylation status.

The protein resides in the cell membrane. Its subcellular location is the cell projection. It localises to the microvillus. The enzyme catalyses H(+)(in) = H(+)(out). With respect to regulation, activated by both acid and alkali, with proton influx in response to extracellular acid and proton efflux during alkali stimulation. Inhibited by Zn(2+); this inhibition is thought to be pH-sensitive. Currents evoked in response to mild acid (pH 6.0) stimulus may also be mildly potentiated by exposure to Zn(2+). Activated by NH(4)Cl. Proton-selective ion channel. Biphasically modulated by acid and alkali, mediating proton influx and efflux in response to extracellular acid and base stimulation, respectively. Sour taste receptor, which carries inward currents in response to extracellular acidification. Sensor for ammonium chloride (NH(4)Cl) in taste receptor cells. NH(4)Cl acts by increasing the intracellular pH, thereby generating a driving force for proton entry through OTOP1 channel. Might also participate in alkaline sensation. Plays a role in the regulation of Ca(2+) flux in response to purigenic (ATP, ADP and UDP) stimuli, leading to increase in cytosolic Ca(2+) due to influx of extracellular calcium. May play this role by inhibiting P2Y purinoceptor-mediated Ca(2+) release in a Ca(2+)-dependent manner and promote an influx of Ca(2+) in response to ATP. Through this mechanism and possibly others, plays a role in the formation and function of calcium carbonate-based structures in the vestibular system of the inner ear, called otoconia, that sense gravity and linear acceleration. In obesity, may attenuate adipose tissue inflammation, through the negative regulation of IFNG signaling, hence may play an adaptive role in the maintainance of metabolic homeostasis. Following alkali activation, may also be permeable Na(+), K(+), Cs(+) and Li(+). The chain is Proton channel OTOP1 from Homo sapiens (Human).